Reading from the N-terminus, the 98-residue chain is Small ribosomal subunit protein eS24 (98 aa).

It belongs to the eukaryotic ribosomal protein eS24 family.

The sequence is that of Small ribosomal subunit protein eS24 from Thermococcus onnurineus (strain NA1).